Here is a 243-residue protein sequence, read N- to C-terminus: Putative ABC transporter arginine-binding protein 2 (243 aa).

The N-terminal stretch at Met-1–Ala-19 is a signal peptide.

This sequence belongs to the bacterial solute-binding protein 3 family. In terms of assembly, the complex is composed of two ATP-binding proteins (ArtP), two transmembrane proteins (ArtM and ArtQ) and two solute-binding proteins (ArtJ and ArtI).

Its subcellular location is the periplasm. Part of the ABC transporter complex ArtPIQMJ involved in arginine transport. In Escherichia coli (strain K12), this protein is Putative ABC transporter arginine-binding protein 2 (artI).